The chain runs to 125 residues: Small ribosomal subunit protein uS12 (125 aa).

Residues 9 to 31 (RQGREVEKIKSKSPAMENSPQRR) are disordered. A 3-methylthioaspartic acid modification is found at D89. The disordered stretch occupies residues 106 to 125 (GVKDRKQSRSKYGAKRPKKA). Residues 113-125 (SRSKYGAKRPKKA) are compositionally biased toward basic residues.

Belongs to the universal ribosomal protein uS12 family. In terms of assembly, part of the 30S ribosomal subunit. Contacts proteins S8 and S17. May interact with IF1 in the 30S initiation complex.

With S4 and S5 plays an important role in translational accuracy. Functionally, interacts with and stabilizes bases of the 16S rRNA that are involved in tRNA selection in the A site and with the mRNA backbone. Located at the interface of the 30S and 50S subunits, it traverses the body of the 30S subunit contacting proteins on the other side and probably holding the rRNA structure together. The combined cluster of proteins S8, S12 and S17 appears to hold together the shoulder and platform of the 30S subunit. The chain is Small ribosomal subunit protein uS12 from Polaromonas sp. (strain JS666 / ATCC BAA-500).